The primary structure comprises 311 residues: Olfactory receptor 4S2 (311 aa).

The Extracellular segment spans residues Met1–Lys23. N-linked (GlcNAc...) asparagine glycosylation is present at Asn6. A helical transmembrane segment spans residues Val24–Val47. The Cytoplasmic portion of the chain corresponds to Cys48–Ser55. The helical transmembrane segment at Pro56–Pro77 threads the bilayer. The Extracellular portion of the chain corresponds to Lys78–Gln98. Residues Cys95 and Cys187 are joined by a disulfide bond. A helical membrane pass occupies residues Leu99–Tyr118. Residues Asp119–Glu137 are Cytoplasmic-facing. The helical transmembrane segment at Thr138–Ile156 threads the bilayer. Residues Gln157–Val193 are Extracellular-facing. A helical transmembrane segment spans residues Gly194–Ser217. Residues Ile218–Lys233 are Cytoplasmic-facing. A helical membrane pass occupies residues Ala234–Tyr256. Over Met257–Lys267 the chain is Extracellular. Residues Met268 to Leu287 traverse the membrane as a helical segment. The Cytoplasmic portion of the chain corresponds to Arg288–Lys311.

The protein belongs to the G-protein coupled receptor 1 family.

The protein resides in the cell membrane. Its function is as follows. Odorant receptor. This Homo sapiens (Human) protein is Olfactory receptor 4S2 (OR4S2).